The chain runs to 179 residues: MIFYLHGFDATSPGNHEKMRQLQFIDPDVRLISYSTLHPKHDMQYLLKEVAKQMQHSDDPAPLMVGVGLGAYWAERIGFLNGLKSVLINPNLHPENTMQGKIDRPEEYADIANKCVSEFRMKNTHKAMCILSRFDEVLESQLSADELSRYYAIEWDETQPHKFPQLAAHLPKIKAFKLG.

The protein belongs to the UPF0227 family.

The protein is UPF0227 protein SO_2251 of Shewanella oneidensis (strain ATCC 700550 / JCM 31522 / CIP 106686 / LMG 19005 / NCIMB 14063 / MR-1).